Reading from the N-terminus, the 493-residue chain is Ribosomal protein uS12 methylthiotransferase RimO (493 aa).

The MTTase N-terminal domain maps to 5–121 (RTVALVTLGC…ISDRLQTILN (117 aa)). [4Fe-4S] cluster contacts are provided by cysteine 14, cysteine 50, and cysteine 84. The disordered stretch occupies residues 153–177 (LPGHGPTDLPEGVAPASGPRAPLRR). One can recognise a Radical SAM core domain in the interval 179-410 (LDGSPVASVK…RLAEELVSQR (232 aa)). Residues cysteine 193, cysteine 197, and cysteine 200 each coordinate [4Fe-4S] cluster. A TRAM domain is found at 412–482 (DERVGATVRV…GVDLVAEPLL (71 aa)).

This sequence belongs to the methylthiotransferase family. RimO subfamily. It depends on [4Fe-4S] cluster as a cofactor.

The protein localises to the cytoplasm. The enzyme catalyses L-aspartate(89)-[ribosomal protein uS12]-hydrogen + (sulfur carrier)-SH + AH2 + 2 S-adenosyl-L-methionine = 3-methylsulfanyl-L-aspartate(89)-[ribosomal protein uS12]-hydrogen + (sulfur carrier)-H + 5'-deoxyadenosine + L-methionine + A + S-adenosyl-L-homocysteine + 2 H(+). Catalyzes the methylthiolation of an aspartic acid residue of ribosomal protein uS12. The chain is Ribosomal protein uS12 methylthiotransferase RimO from Streptomyces coelicolor (strain ATCC BAA-471 / A3(2) / M145).